We begin with the raw amino-acid sequence, 504 residues long: MDPGQQPPPQPAPQGQGQPPSQPPQGQGPPSGPGQPAPAATQAAPQAPPAGHQIVHVRGDSETDLEALFNAVMNPKTANVPQTVPMRLRKLPDSFFKPPEPKSHSRQASTDAGTAGALTPQHVRAHSSPASLQLGAVSPGTLTPTGVVSGPAATPTAQHLRQSSFEIPDDVPLPAGWEMAKTSSGQRYFLNHIDQTTTWQDPRKAMLSQMNVTAPTSPPVQQNMMNSASGPLPDGWEQAMTQDGEIYYINHKNKTTSWLDPRLDPRFAMNQRISQSAPVKQPPPLAPQSPQGGVMGGSNSNQQQQMRLQQLQMEKERLRLKQQELLRQAMRNINPSTANSPKCQELALRSQLPTLEQDGGTQNPVSSPGMSQELRTMTTNSSDPFLNSGTYHSRDESTDSGLSMSSYSVPRTPDDFLNSVDEMDTGDTINQSTLPSQQNRFPDYLEAIPGTNVDLGTLEGDGMNIEGEELMPSLQEALSSDILNDMESVLAATKLDKESFLTWL.

Pro residues-rich tracts occupy residues 1–12 and 20–36; these read MDPGQQPPPQPA and PSQP…PGQP. The interval 1–59 is disordered; the sequence is MDPGQQPPPQPAPQGQGQPPSQPPQGQGPPSGPGQPAPAATQAAPQAPPAGHQIVHVRG. A compositionally biased stretch (low complexity) spans 37 to 51; that stretch reads APAATQAAPQAPPAG. The residue at position 61 (Ser61) is a Phosphoserine; by LATS1 and LATS2. A Phosphothreonine modification is found at Thr63. The stretch at 86-100 forms a coiled coil; that stretch reads MRLRKLPDSFFKPPE. Lys90 carries the post-translational modification N6-lactoyllysine. A disordered region spans residues 91-114; sequence LPDSFFKPPEPKSHSRQASTDAGT. Position 105 is a phosphoserine (Ser105). Phosphoserine; by LATS1 and LATS2 is present on Ser109. Thr110 is subject to Phosphothreonine. Thr119 carries the post-translational modification Phosphothreonine; by MAPK8 and MAPK9. Ser127 bears the Phosphoserine; by LATS1 and LATS2 mark. Residues Ser128 and Ser131 each carry the phosphoserine modification. The disordered stretch occupies residues 133-158; it reads QLGAVSPGTLTPTGVVSGPAATPTAQ. Phosphoserine; by MAPK8 and MAPK9 is present on Ser138. Position 154 is a phosphothreonine; by MAPK8 and MAPK9 (Thr154). Position 164 is a phosphoserine; by LATS1 and LATS2 (Ser164). 2 WW domains span residues 171-204 and 230-263; these read VPLP…DPRK and GPLP…DPRL. Phosphoserine is present on residues Ser274 and Ser289. Disordered regions lie at residues 275-309 and 355-407; these read QSAP…MRLQ and LEQD…MSSY. The segment at 291–504 is transactivation domain; sequence QGGVMGGSNS…LDKESFLTWL (214 aa). Residues 298–359 are a coiled coil; that stretch reads SNSNQQQQMR…SQLPTLEQDG (62 aa). Polar residues predominate over residues 355-391; the sequence is LEQDGGTQNPVSSPGMSQELRTMTTNSSDPFLNSGTY. Phosphoserine; by MAPK8 and MAPK9 is present on Ser367. Ser371, Ser381, Ser382, and Ser388 each carry phosphoserine. The residue at position 397 (Ser397) is a Phosphoserine; by LATS1 and LATS2. 2 positions are modified to phosphoserine; by CK1: Ser400 and Ser403. Tyr407 is subject to Phosphotyrosine; by ABL1. The residue at position 412 (Thr412) is a Phosphothreonine; by MAPK8 and MAPK9.

Belongs to the YAP1 family. In terms of assembly, part of a complex when phosphorylated that contains DSG3, PKP1, YAP1 and YWHAG; the complex is required for localization of DSG3 and YAP1 to the cell membrane in keratinocytes. Binds to the SH3 domain of the YES kinase. Binds to WBP1 and WBP2. Binds, in vitro, through the WW1 domain, to neural isoforms of ENAH that contain the PPSY motif. The phosphorylated form interacts with YWHAB. Interacts (via WW domains) with LATS1 (via PPxY motif 2). Interacts with LATS2. Interacts with TEAD1, TEAD2, TEAD3 and TEAD4. Interacts with TP73. Interacts with RUNX1. Interacts with HCK. Interacts (via WW domains) with PTPN14 (via PPxY motif 2); this interaction leads to the cytoplasmic sequestration of YAP1 and inhibits its transcriptional coactivator activity. Interacts (when phosphorylated at Ser-127) with SMAD2, SMAD3 and WWTR1. Interacts with PRRG2 (via cytoplasmic domain). Interacts (via WW domains) with PRRG4 (via cytoplasmic domain). Interacts (phosphorylated) with CLDN18; the interaction sequesters YAP1 away from the nucleus and thereby restricts transcription of YAP1 target genes. Interacts with SMAD1. Interacts with AMOTL2, the interaction is required for ubiquitination of AMOTL2 and localization of YAP1 to tight junctions. Interacts with AMOT isoform 1; the interaction facilitates translocation of YAP1 to the cytoplasm and tight junctions. As to quaternary structure, interacts (via WW domain 1) with isoform 3 of ERBB4 (via PPxY motif 2). Post-translationally, phosphorylated by LATS1 and LATS2; leading to cytoplasmic translocation and inactivation. Phosphorylated by ABL1; leading to YAP1 stabilization, enhanced interaction with TP73 and recruitment onto proapoptotic genes; in response to DNA damage. Phosphorylation at Ser-400 and Ser-403 by CK1 is triggered by previous phosphorylation at Ser-397 by LATS proteins and leads to YAP1 ubiquitination by SCF(beta-TRCP) E3 ubiquitin ligase and subsequent degradation. Phosphorylated at Thr-119, Ser-138, Thr-154, Ser-367 and Thr-412 by MAPK8/JNK1 and MAPK9/JNK2, which is required for the regulation of apoptosis by YAP1. Phosphorylated in the nucleus by PRP4K; phosphorylation leads to nuclear exclusion. Lactylation by AARS1 promotes nuclear localization and stabilization of YAP1, leading to increased Hippo signaling pathway. Delactylated by SIRT1. In terms of processing, ubiquitinated by SCF(beta-TRCP) E3 ubiquitin ligase. As to expression, increased expression seen in some liver and prostate cancers. Isoforms lacking the transactivation domain found in striatal neurons of patients with Huntington disease (at protein level).

Its subcellular location is the cytoplasm. It localises to the nucleus. The protein resides in the cell junction. It is found in the tight junction. The protein localises to the cell membrane. Functionally, transcriptional regulator with dual roles as a coactivator and corepressor. Critical downstream regulatory target in the Hippo signaling pathway, crucial for organ size control and tumor suppression by restricting proliferation and promoting apoptosis. The Hippo signaling pathway core involves a kinase cascade featuring STK3/MST2 and STK4/MST1, along with its regulatory partner SAV1, which phosphorylates and activates LATS1/2 in complex with their regulatory protein, MOB1. This activation leads to the phosphorylation and inactivation of the YAP1 oncoprotein and WWTR1/TAZ. Phosphorylation of YAP1 by LATS1/2 prevents its nuclear translocation, thereby regulating the expression of its target genes. The transcriptional regulation of gene expression requires TEAD transcription factors and modulates cell growth, anchorage-independent growth, and induction of epithelial-mesenchymal transition (EMT). Plays a key role in tissue tension and 3D tissue shape by regulating the cortical actomyosin network, acting via ARHGAP18, a Rho GTPase activating protein that suppresses F-actin polymerization. It also suppresses ciliogenesis by acting as a transcriptional corepressor of TEAD4 target genes AURKA and PLK1. In conjunction with WWTR1, regulates TGFB1-dependent SMAD2 and SMAD3 nuclear accumulation. Synergizes with WBP2 to enhance PGR activity. Its function is as follows. Activates the C-terminal fragment (CTF) of ERBB4 (isoform 3). This Homo sapiens (Human) protein is Transcriptional coactivator YAP1.